We begin with the raw amino-acid sequence, 99 residues long: Acylphosphatase (99 aa).

The 93-residue stretch at 5-97 (IRQVMISGRV…QPGERFSILS (93 aa)) folds into the Acylphosphatase-like domain. Active-site residues include arginine 20 and asparagine 38.

The protein belongs to the acylphosphatase family.

The catalysed reaction is an acyl phosphate + H2O = a carboxylate + phosphate + H(+). This is Acylphosphatase (acyP) from Rhodopseudomonas palustris (strain ATCC BAA-98 / CGA009).